The following is a 348-amino-acid chain: Glucokinase (348 aa).

Residue 14 to 19 (GDVGGS) participates in ATP binding. The tract at residues 327-348 (SDPAPVAAPTHPRGGTAGDMHA) is disordered.

This sequence belongs to the bacterial glucokinase family.

Its subcellular location is the cytoplasm. It carries out the reaction D-glucose + ATP = D-glucose 6-phosphate + ADP + H(+). The chain is Glucokinase from Chromobacterium violaceum (strain ATCC 12472 / DSM 30191 / JCM 1249 / CCUG 213 / NBRC 12614 / NCIMB 9131 / NCTC 9757 / MK).